Reading from the N-terminus, the 181-residue chain is MAFLTALILVSIVTAAHGQTVVSIPLGHNYTLIGPPITSEVIWTKLGSVDYFDIICNKTKPIIVTCNIQNLTLINVSKVYSGYYYGYDRYSSQYRNYLVRVTQSKTTKMPNMAEIRSDDNSLETFTSSTTPDEKNIPDSMIAIIAAVAVVMALPVICMLLYACRYKKFHPKKQDLLLRLNI.

N-linked (GlcNAc...) asparagine; by host glycosylation is found at asparagine 29, asparagine 57, asparagine 70, and asparagine 75.

Belongs to the adenoviridae E3_20 family.

Functionally, E3 proteins seem to be dispensable for virus growth in tissue culture cells. They are potentially important for virus growth under special conditions; E3 region may help adenoviruses to evade the immune surveillance of the host. The sequence is that of Early E3 20.3 kDa glycoprotein from Homo sapiens (Human).